The chain runs to 501 residues: Cytochrome P450 90A4 (501 aa).

The chain crosses the membrane as a helical span at residues 2–22 (AAAALLLLAAAAAAVVVAMAL). Heme is bound at residue Cys-446.

Belongs to the cytochrome P450 family. Heme is required as a cofactor.

It is found in the membrane. It functions in the pathway plant hormone biosynthesis; brassinosteroid biosynthesis. Its function is as follows. Catalyzes the C23-alpha-hydroxylation step in brassinosteroid biosynthesis. Converts 6-deoxocathasterone to 6-deoxoteasterone in the late C6-oxidation pathway and cathasterone to teasterone (TE) in the early C6-oxidation pathway of brassinolide (BL) biosynthesis. The polypeptide is Cytochrome P450 90A4 (Oryza sativa subsp. indica (Rice)).